We begin with the raw amino-acid sequence, 184 residues long: Transposon Tn917 resolvase (184 aa).

Residues 1–134 form the Resolvase/invertase-type recombinase catalytic domain; it reads MIFGYARVST…SGLKAARVRG (134 aa). The active-site O-(5'-phospho-DNA)-serine intermediate is S9. A DNA-binding region (H-T-H motif) is located at residues 161–180; it reads IRQILDASKLSKTTFYRYLN.

It belongs to the site-specific recombinase resolvase family.

Functionally, resolvase catalyzes the resolution (a site-specific recombination) of the cointegrated replicon to yield the final transposition products. The chain is Transposon Tn917 resolvase (tnpR) from Enterococcus faecalis (Streptococcus faecalis).